A 69-amino-acid chain; its full sequence is U2-agatoxin-Ao1i (69 aa).

An N-terminal signal peptide occupies residues 1–20; that stretch reads MKAIISLLLISAMVFSMIEA. The propeptide occupies 21 to 34; it reads VPVXXGLQLFESER. 3 cysteine pairs are disulfide-bonded: Cys36/Cys52, Cys43/Cys57, and Cys51/Cys67. Leu68 carries the post-translational modification Leucine amide.

Belongs to the neurotoxin 01 (U2-agtx) family. As to expression, expressed by the venom gland.

The protein localises to the secreted. Insect active toxin causing rapid but reversible paralysis in crickets. No activity shown in mammals. Does not show effect on mammalian voltage-gated calcium channels. The sequence is that of U2-agatoxin-Ao1i from Agelena orientalis (Funnel-web spider).